The chain runs to 320 residues: Malate dehydrogenase (320 aa).

Residues Gly10–Gly15 and Asp34 contribute to the NAD(+) site. Substrate-binding residues include Arg83 and Arg89. NAD(+) contacts are provided by residues Asn96 and Ile119–Asn121. Residues Asn121 and Arg152 each contribute to the substrate site. Residue His176 is the Proton acceptor of the active site.

This sequence belongs to the LDH/MDH superfamily. MDH type 3 family.

The catalysed reaction is (S)-malate + NAD(+) = oxaloacetate + NADH + H(+). Functionally, catalyzes the reversible oxidation of malate to oxaloacetate. The chain is Malate dehydrogenase from Bartonella tribocorum (strain CIP 105476 / IBS 506).